We begin with the raw amino-acid sequence, 114 residues long: FK506-binding protein 1 (114 aa).

Positions 26–114 constitute a PPIase FKBP-type domain; sequence GDLVTIHYTG…IFEVELLKVN (89 aa).

This sequence belongs to the FKBP-type PPIase family. FKBP1 subfamily.

It is found in the cytoplasm. The enzyme catalyses [protein]-peptidylproline (omega=180) = [protein]-peptidylproline (omega=0). Its activity is regulated as follows. Inhibited by both FK506 and rapamycin. PPIases accelerate the folding of proteins. It catalyzes the cis-trans isomerization of proline imidic peptide bonds in oligopeptides. The protein is FK506-binding protein 1 (FPR1) of Eremothecium gossypii (strain ATCC 10895 / CBS 109.51 / FGSC 9923 / NRRL Y-1056) (Yeast).